Reading from the N-terminus, the 432-residue chain is Adenylosuccinate synthetase (432 aa).

Residues glycine 13–lysine 19 and glycine 41–threonine 43 contribute to the GTP site. Aspartate 14 acts as the Proton acceptor in catalysis. Mg(2+) is bound by residues aspartate 14 and glycine 41. Residues aspartate 14–lysine 17, asparagine 39–histidine 42, threonine 130, arginine 144, glutamine 225, threonine 240, and arginine 304 each bind IMP. The active-site Proton donor is histidine 42. Alanine 300–arginine 306 serves as a coordination point for substrate. Residues arginine 306, lysine 332 to aspartate 334, and serine 415 to glycine 417 contribute to the GTP site.

It belongs to the adenylosuccinate synthetase family. Homodimer. Mg(2+) serves as cofactor.

It is found in the cytoplasm. The catalysed reaction is IMP + L-aspartate + GTP = N(6)-(1,2-dicarboxyethyl)-AMP + GDP + phosphate + 2 H(+). It participates in purine metabolism; AMP biosynthesis via de novo pathway; AMP from IMP: step 1/2. In terms of biological role, plays an important role in the de novo pathway of purine nucleotide biosynthesis. Catalyzes the first committed step in the biosynthesis of AMP from IMP. The chain is Adenylosuccinate synthetase from Salmonella paratyphi C (strain RKS4594).